Here is a 397-residue protein sequence, read N- to C-terminus: P2X purinoceptor 3 (397 aa).

Residues Met-1 to Ser-20 are Cytoplasmic-facing. A helical membrane pass occupies residues Trp-21–Phe-43. Over Leu-44 to Ile-322 the chain is Extracellular. The ATP site is built by Lys-63 and Lys-65. 3 disulfides stabilise this stretch: Cys-107–Cys-153, Cys-116–Cys-137, and Cys-122–Cys-147. Glu-111 serves as a coordination point for Mg(2+). An N-linked (GlcNAc...) asparagine glycan is attached at Asn-139. A Mg(2+)-binding site is contributed by Asp-158. A Ca(2+)-binding site is contributed by Asp-158. N-linked (GlcNAc...) asparagine glycosylation occurs at Asn-170. Thr-172 contacts ATP. Asn-194 is a glycosylation site (N-linked (GlcNAc...) asparagine). 2 cysteine pairs are disulfide-bonded: Cys-203–Cys-213 and Cys-247–Cys-256. Residues Ser-275, Asn-279, and Arg-281 each coordinate ATP. Residue Asn-290 is glycosylated (N-linked (GlcNAc...) asparagine). Lys-299 contacts ATP. A helical transmembrane segment spans residues Ile-323–Ile-341. At Ile-342–His-397 the chain is on the cytoplasmic side. The segment covering Ser-378–Gly-391 has biased composition (polar residues). Positions Ser-378–His-397 are disordered.

The protein belongs to the P2X receptor family. In terms of assembly, homotrimer. Forms heterotrimer with P2RX2. Heterotrimeric P2RX2/3 has a ligand dose-response profile that is distinct from either homotrimeric P2RX2 or P2RX3.

The protein resides in the cell membrane. It carries out the reaction Ca(2+)(in) = Ca(2+)(out). It catalyses the reaction Na(+)(in) = Na(+)(out). With respect to regulation, has high sensitivity to ATP. Fast activation by external ATP. Exhibits rapid desensitization. Sensitives to the ATP agonist:alpha/beta-methylene-ATP. Subject to allosteric inhibition by AF-219. Mg(2+) and Ca(2+) slow deactivation of P2RX3. Functionally, extracellular ATP-activated non-selective cation channel. Plays particularly important role in sensory neurons where its activation is critical for gustatory, nociceptive responses, visceral reflexes and sensory hypersensitization. This chain is P2X purinoceptor 3 (P2RX3), found in Homo sapiens (Human).